The chain runs to 164 residues: Large ribosomal subunit protein bL9 (164 aa).

The protein belongs to the bacterial ribosomal protein bL9 family.

Its function is as follows. Binds to the 23S rRNA. In Borrelia recurrentis (strain A1), this protein is Large ribosomal subunit protein bL9.